A 164-amino-acid chain; its full sequence is Protein-export protein SecB (164 aa).

Belongs to the SecB family. In terms of assembly, homotetramer, a dimer of dimers. One homotetramer interacts with 1 SecA dimer.

It localises to the cytoplasm. In terms of biological role, one of the proteins required for the normal export of preproteins out of the cell cytoplasm. It is a molecular chaperone that binds to a subset of precursor proteins, maintaining them in a translocation-competent state. It also specifically binds to its receptor SecA. The chain is Protein-export protein SecB from Chromohalobacter salexigens (strain ATCC BAA-138 / DSM 3043 / CIP 106854 / NCIMB 13768 / 1H11).